The chain runs to 508 residues: MDWTEKYRPTTLSEVRGNDKARDALKKWAETWDDHREAVILYGSPGIGKTSAAHALANDMEWPTIELNASDSRTKDVINRVAGEAAKSGTLTAGGGGRRLVIMDEADNIHGNADRGGARAITALVKEASQPMILIANEYYEMSNGLRNNCQDIEFRDVSPRSIVPVLRDLCRQEGVEYESDALQELAEQNSGGLRGAVKDLQAIAETTERLTADDVVTGERDTTEGIFEYLDVVLKEAGAQDALEASYDVDETPDDLINWIEDNMPKDYEGTELVRAYEFLSNADQWLGRVRETQNYSFWRYAGDNMTAGVAAARDGTKGGWTRYGPPSYWSKLGRSKGTRNTRDYVAQQIAAIDGVSMRTARREIMPFLATMTHHCRNRELTVAMAATYDMEAEHVSFVTGSGKDTNKVQDIVADAEALKEEAAVEHSGGVFEGASANGGDGDSDADGDAPDTDAGEESGDQQVTLAADDGAESDATSDGTTTDDETETASEAAEDDDQQSGLSDFM.

Residue 43-50 participates in ATP binding; it reads GSPGIGKT. The tract at residues 425 to 508 is disordered; that stretch reads AVEHSGGVFE…DQQSGLSDFM (84 aa). Composition is skewed to acidic residues over residues 443 to 461 and 483 to 500; these read GDSD…EESG and TTDD…DDDQ.

Belongs to the activator 1 small subunits family. RfcL subfamily. In terms of assembly, heteromultimer composed of small subunits (RfcS) and large subunits (RfcL).

Functionally, part of the RFC clamp loader complex which loads the PCNA sliding clamp onto DNA. The sequence is that of Replication factor C large subunit from Haloarcula marismortui (strain ATCC 43049 / DSM 3752 / JCM 8966 / VKM B-1809) (Halobacterium marismortui).